The following is a 433-amino-acid chain: Phosphomethylpyrimidine synthase (433 aa).

Substrate contacts are provided by residues asparagine 66, methionine 94, tyrosine 123, histidine 162, 184–186, 225–228, and glutamate 264; these read SRG and DALR. Position 268 (histidine 268) interacts with Zn(2+). Tyrosine 291 provides a ligand contact to substrate. Histidine 332 lines the Zn(2+) pocket. Residues cysteine 408, cysteine 411, and cysteine 415 each contribute to the [4Fe-4S] cluster site.

The protein belongs to the ThiC family. The cofactor is [4Fe-4S] cluster.

The catalysed reaction is 5-amino-1-(5-phospho-beta-D-ribosyl)imidazole + S-adenosyl-L-methionine = 4-amino-2-methyl-5-(phosphooxymethyl)pyrimidine + CO + 5'-deoxyadenosine + formate + L-methionine + 3 H(+). It functions in the pathway cofactor biosynthesis; thiamine diphosphate biosynthesis. Catalyzes the synthesis of the hydroxymethylpyrimidine phosphate (HMP-P) moiety of thiamine from aminoimidazole ribotide (AIR) in a radical S-adenosyl-L-methionine (SAM)-dependent reaction. The protein is Phosphomethylpyrimidine synthase of Saccharolobus islandicus (strain M.16.27) (Sulfolobus islandicus).